Reading from the N-terminus, the 100-residue chain is Small ribosomal subunit protein bS20 (100 aa).

The protein belongs to the bacterial ribosomal protein bS20 family.

In terms of biological role, binds directly to 16S ribosomal RNA. The protein is Small ribosomal subunit protein bS20 of Prochlorococcus marinus (strain MIT 9211).